We begin with the raw amino-acid sequence, 410 residues long: Kynureninase (410 aa).

Residues T108, S109, 135–138 (FPTD), T176, D205, H208, and Y230 contribute to the pyridoxal 5'-phosphate site. An N6-(pyridoxal phosphate)lysine modification is found at K231. The pyridoxal 5'-phosphate site is built by W260 and T286.

The protein belongs to the kynureninase family. Homodimer. The cofactor is pyridoxal 5'-phosphate.

It catalyses the reaction L-kynurenine + H2O = anthranilate + L-alanine + H(+). It carries out the reaction 3-hydroxy-L-kynurenine + H2O = 3-hydroxyanthranilate + L-alanine + H(+). Its pathway is amino-acid degradation; L-kynurenine degradation; L-alanine and anthranilate from L-kynurenine: step 1/1. It functions in the pathway cofactor biosynthesis; NAD(+) biosynthesis; quinolinate from L-kynurenine: step 2/3. In terms of biological role, catalyzes the cleavage of L-kynurenine (L-Kyn) and L-3-hydroxykynurenine (L-3OHKyn) into anthranilic acid (AA) and 3-hydroxyanthranilic acid (3-OHAA), respectively. The sequence is that of Kynureninase from Deinococcus radiodurans (strain ATCC 13939 / DSM 20539 / JCM 16871 / CCUG 27074 / LMG 4051 / NBRC 15346 / NCIMB 9279 / VKM B-1422 / R1).